Here is a 178-residue protein sequence, read N- to C-terminus: Cytochrome b6-f complex iron-sulfur subunit (178 aa).

A helical membrane pass occupies residues 20–42; the sequence is LLTFGTATGVALGALYPVANYFM. The region spanning 65–161 is the Rieske domain; that stretch reads KTGWLASHQA…VDVDDDAVLV (97 aa). Residues cysteine 107, histidine 109, cysteine 125, and histidine 128 each coordinate [2Fe-2S] cluster. Cysteine 112 and cysteine 127 are joined by a disulfide.

Belongs to the Rieske iron-sulfur protein family. The 4 large subunits of the cytochrome b6-f complex are cytochrome b6, subunit IV (17 kDa polypeptide, PetD), cytochrome f and the Rieske protein, while the 4 small subunits are PetG, PetL, PetM and PetN. The complex functions as a dimer. [2Fe-2S] cluster is required as a cofactor.

The protein resides in the cellular thylakoid membrane. The enzyme catalyses 2 oxidized [plastocyanin] + a plastoquinol + 2 H(+)(in) = 2 reduced [plastocyanin] + a plastoquinone + 4 H(+)(out). Component of the cytochrome b6-f complex, which mediates electron transfer between photosystem II (PSII) and photosystem I (PSI), cyclic electron flow around PSI, and state transitions. The chain is Cytochrome b6-f complex iron-sulfur subunit from Prochlorococcus marinus subsp. pastoris (strain CCMP1986 / NIES-2087 / MED4).